The chain runs to 366 residues: Terpene cyclase atmA (366 aa).

Helical transmembrane passes span 9-29, 84-104, 113-133, 162-182, 195-215, 233-253, 291-311, and 333-353; these read FLLL…NNGF, LTGL…VVHI, GMVI…GIVI, GLVV…SLPA, IAAW…HHLF, VYHF…SAFV, AGLF…TMVW, and ILRL…VRLI.

Belongs to the membrane-bound ascI terpene cyclase family.

The protein localises to the membrane. Aflatrem synthesis protein A; part of the ATM2 gene cluster that mediates the biosynthesis of aflatrem, a tremorgenic mycotoxin with acute neurotoxic effects. Synthesis of geranylgeranyl diphosphate (GGPP) by AtmG (a GGPP synthase) precedes condensation of GGPP with indole 3-glycerol phosphate, followed by epoxidation and cyclization by AtmM (a FAD-dependent monooxygenase) and AtmC (a prenyltransferase) to produce paspaline. AtmB is also essential for paspaline production, but its exact role has not been identified yet. AtmP, a cytochrome P450 monooxygenase, subsequently converts paspaline to 13-desoxypaxilline via PC-M6 by removal of the C-30 methyl group and oxidation at C-10. AtmQ, a cytochrome P450 monooxygenase, then catalyzes the oxidation of 13-desoxypaxilline, first at C-7 to produce paspalicine and then at C-13 to form paspalinine. Finally, AtmD prenylates paspalinine to form aflatrem. The role of atmA in the aflatrem biosynthesis is still unknown. This chain is Terpene cyclase atmA, found in Aspergillus flavus.